The sequence spans 691 residues: Ribonuclease J (691 aa).

Residues 1 to 89 (MTDNNHYENN…TRNYAKEELD (89 aa)) form a disordered region. Positions 1–132 (MTDNNHYENN…KIQVEHLNPH (132 aa)) are loss of region decreases protein stability, still able to interact with RhpA, but has decreased RNase activity even on ssRNA. Residues 10 to 19 (NESNENSSEN) are compositionally biased toward low complexity. Residues 41–57 (RENAQKNGESSHHEAPS) are compositionally biased toward basic and acidic residues. A compositionally biased stretch (basic residues) spans 58–82 (HHKKEHRPNKKPNNHHKQKHAKTRN). 2 positions are modified to N6-acetyllysine: K134 and K140. The Zn(2+) site is built by H208, H210, D212, H213, H277, and D299. K323, K337, and K397 each carry N6-acetyllysine. Substrate is bound at residue 500–504 (HVSGH). Residue K511 is modified to N6-acetyllysine. Residue H526 coordinates Zn(2+). An N6-acetyllysine mark is found at K547, K634, and K649.

It belongs to the metallo-beta-lactamase superfamily. RNA-metabolizing metallo-beta-lactamase-like family. Bacterial RNase J subfamily. As to quaternary structure, homodimer. Homotetramer; dimer of homodimers. Interacts with RNA helicase RphA, might be a member of a minimal RNA degradosome complex. The cofactor is Zn(2+). Acetylated on nine lysine residues. Some of the residues are acetylated by multiple different mechanisms. RimL is partially responsible for the acetylation of Lys-323, Lys-397 and Lys-649. HPB8_1270 homolog is partially responsible for the acetylation of Lys-323, Lys-397, Lys-511 and Lys-649. Acetyl-phosphate-mediated non-enzymatic acetylation pathway takes part in the acetylation of Lys-134, Lys-323, Lys-397, Lys-511 and Lys-649. Acetylation of the remaining residues Lys-140, Lys-337, Lys-547 and Lys-634 occurs by a yet undetermined mechanism. Acetylation on a number of these residues is important for growth regulation and proper cell morphology.

The protein resides in the cytoplasm. Its activity is regulated as follows. Catalytic activity is regulated by the balance between homodimers and homotetramers, with homotetramers being the active forms of this enzyme. Acetylation allosterically regulates the homooligomerization state and hence the catalytic activity. In terms of biological role, an RNase that has 5'-3' exoribonuclease and endoribonuclease activity. Degrades 5'-monophosphorylated ssRNA and dsRNA, considerably more active on ssRNA. Association with RhpA significantly increases the dsRNase activity. Degrades RNA substrate with hairpin structures at both ends with low activity, but presence of RhpA significantly increases the activity on this substrate. Stimulates ATPase activity of RNA helicase RhpA. Involved in stabilization of mRNA but apparently not rRNA. The protein is Ribonuclease J of Helicobacter pylori (strain B128).